A 501-amino-acid chain; its full sequence is Acid-sensing ion channel 1A (501 aa).

Over 1–54 the chain is Cytoplasmic; it reads MKTSVMDLKVEPMDIDFDQPPPLQVFAHTSTLHGISHIFSYEKITAKCCLWVVF. Residues 55–71 traverse the membrane as a helical segment; that stretch reads FLSSLTFLMYVCIDRIQ. Topologically, residues 72 to 429 are extracellular; that stretch reads FYLEYPHVTK…ETIEQRKAYE (358 aa). Disulfide bonds link Cys-98–Cys-199, Cys-177–Cys-184, Cys-294–Cys-369, Cys-312–Cys-365, Cys-316–Cys-363, Cys-325–Cys-347, and Cys-327–Cys-339. N-linked (GlcNAc...) asparagine glycosylation is present at Asn-164. N-linked (GlcNAc...) asparagine glycosylation occurs at Asn-370. The chain crosses the membrane as a discontinuously helical span at residues 430–460; it reads VAGLLGDIGGQMGLFIGASILTILELFDYLY. A GAS motif; ion selectivity filter motif is present at residues 446–448; that stretch reads GAS. Residues 461 to 501 lie on the Cytoplasmic side of the membrane; that stretch reads EVMKYRLCRCSNKKHHNNNNNTDHNAVFSLDDVNCHVSKFH.

This sequence belongs to the amiloride-sensitive sodium channel (TC 1.A.6) family. ASIC1 subfamily. As to quaternary structure, homotrimer. Heterotrimer; with other ASIC proteins producing channel with different properties. Interacts with asic1c. As to expression, expressed in central nervous system. Faintly expressed in the trunk, presumably in dorsal root ganglia.

It localises to the cell membrane. The protein localises to the postsynaptic cell membrane. It is found in the cell projection. The protein resides in the dendrite. The enzyme catalyses Na(+)(in) = Na(+)(out). The catalysed reaction is K(+)(in) = K(+)(out). It catalyses the reaction Li(+)(in) = Li(+)(out). It carries out the reaction Ca(2+)(in) = Ca(2+)(out). Inhibited by the diuretic drug amiloride. Its function is as follows. Forms voltage-independent, pH-gated trimeric sodium channels that act as postsynaptic excitatory receptors in the nervous system, playing a crucial role in regulating synaptic plasticity, learning, and memory. Upon extracellular pH drop this channel elicits transient, fast activating, and completely desensitizing inward currents. Displays high selectivity for sodium ions but can also permit the permeation of other cations. This Danio rerio (Zebrafish) protein is Acid-sensing ion channel 1A (asic1a).